Reading from the N-terminus, the 1522-residue chain is Dicer-like protein 1 (1522 aa).

Residues 1 to 12 show a composition bias toward acidic residues; sequence MTWAGDVEEQDD. Residues 1-37 are disordered; the sequence is MTWAGDVEEQDDYFSCSDVSTSGDRRKRAPQTVTQEE. Positions 76 to 258 constitute a Helicase ATP-binding domain; sequence LFLRAKMQNT…EHVREAAREL (183 aa). Position 89 to 96 (89 to 96) interacts with ATP; sequence LDTGTGKT. A DEAH box motif is present at residues 202-205; the sequence is DEAH. The Helicase C-terminal domain maps to 408–576; it reads WLNLYYERTT…DVEQEKAELI (169 aa). The 101-residue stretch at 600–700 folds into the Dicer dsRNA-binding fold domain; it reads SLSILSHFVA…LPTISKYLPA (101 aa). The PAZ domain maps to 859-980; the sequence is PFWKWSPQSR…ICPEPLHISN (122 aa). RNase III domains are found at residues 995 to 1166 and 1222 to 1373; these read IIHR…MQHH and AHKI…VDSE. 3 residues coordinate Mg(2+): Glu-1262, Asp-1359, and Glu-1362. The region spanning 1409–1478 is the DRBM domain; the sequence is TRLSRLLSIN…SHAALEKLEG (70 aa). The Zn(2+) site is built by Cys-1421, His-1449, Cys-1490, and Cys-1492.

The protein belongs to the helicase family. Dicer subfamily. Mg(2+) serves as cofactor. Mn(2+) is required as a cofactor.

Its function is as follows. Dicer-like endonuclease involved in cleaving double-stranded RNA in the RNA interference (RNAi) pathway. Produces 21 to 25 bp dsRNAs (siRNAs) which target the selective destruction of homologous RNAs leading to sequence-specific suppression of gene expression, called post-transcriptional gene silencing (PTGS). Part of a broad host defense response against viral infection and transposons. This chain is Dicer-like protein 1 (DCL1), found in Phaeosphaeria nodorum (strain SN15 / ATCC MYA-4574 / FGSC 10173) (Glume blotch fungus).